We begin with the raw amino-acid sequence, 282 residues long: ATP phosphoribosyltransferase (282 aa).

The protein belongs to the ATP phosphoribosyltransferase family. Long subfamily. Requires Mg(2+) as cofactor.

Its subcellular location is the cytoplasm. The enzyme catalyses 1-(5-phospho-beta-D-ribosyl)-ATP + diphosphate = 5-phospho-alpha-D-ribose 1-diphosphate + ATP. The protein operates within amino-acid biosynthesis; L-histidine biosynthesis; L-histidine from 5-phospho-alpha-D-ribose 1-diphosphate: step 1/9. With respect to regulation, feedback inhibited by histidine. Functionally, catalyzes the condensation of ATP and 5-phosphoribose 1-diphosphate to form N'-(5'-phosphoribosyl)-ATP (PR-ATP). Has a crucial role in the pathway because the rate of histidine biosynthesis seems to be controlled primarily by regulation of HisG enzymatic activity. In Haloarcula marismortui (strain ATCC 43049 / DSM 3752 / JCM 8966 / VKM B-1809) (Halobacterium marismortui), this protein is ATP phosphoribosyltransferase.